The following is a 485-amino-acid chain: Aspartyl/glutamyl-tRNA(Asn/Gln) amidotransferase subunit B (485 aa).

The protein belongs to the GatB/GatE family. GatB subfamily. Heterotrimer of A, B and C subunits.

It catalyses the reaction L-glutamyl-tRNA(Gln) + L-glutamine + ATP + H2O = L-glutaminyl-tRNA(Gln) + L-glutamate + ADP + phosphate + H(+). It carries out the reaction L-aspartyl-tRNA(Asn) + L-glutamine + ATP + H2O = L-asparaginyl-tRNA(Asn) + L-glutamate + ADP + phosphate + 2 H(+). Functionally, allows the formation of correctly charged Asn-tRNA(Asn) or Gln-tRNA(Gln) through the transamidation of misacylated Asp-tRNA(Asn) or Glu-tRNA(Gln) in organisms which lack either or both of asparaginyl-tRNA or glutaminyl-tRNA synthetases. The reaction takes place in the presence of glutamine and ATP through an activated phospho-Asp-tRNA(Asn) or phospho-Glu-tRNA(Gln). The sequence is that of Aspartyl/glutamyl-tRNA(Asn/Gln) amidotransferase subunit B from Opitutus terrae (strain DSM 11246 / JCM 15787 / PB90-1).